The sequence spans 956 residues: MPRVSAPLVLLPAWLLMVACSPHSLRIAAILDDPMECSRGERLSITLAKNRINRAPERLGKAKVEVDIFELLRDSEYETAETMCQILPKGVVAVLGPSSSPASSSIISNICGEKEVPHFKVAPEEFVRFQLQRFTTLNLHPSNTDISVAVAGILNFFNCTTACLICAKAECLLNLEKLLRQFLISKDTLSVRMLDDTRDPTPLLKEIRDDKTATIIIHANASMSHTILLKAAELGMVSAYYTYIFTNLEFSLQRMDSLVDDRVNILGFSIFNQSHAFFQEFSQSLNQSWQENCDHVPFTGPALSSALLFDAVYAVVTAVQELNRSQEIGVKPLSCGSAQIWQHGTSLMNYLRMVELEGLTGHIEFNSKGQRSNYALKILQFTRNGFQQIGQWHVAEGLSMDSRLYASNISDSLFNTTLVVTTILENPYLMLKGNHQEMEGNDRYEGFCVDMLKELAEILRFNYKIRLVGDGVYGVPEANGTWTGMVGELIARKADLAVAGLTITAEREKVIDFSKPFMTLGISILYRVHMGRRPGYFSFLDPFSPGVWLFMLLAYLAVSCVLFLVARLTPYEWYSPHPCAQGRCNLLVNQYSLGNSLWFPVGGFMQQGSTIAPRALSTRCVSGVWWAFTLIIISSYTANLAAFLTVQRMEVPIESVDDLADQTAIEYGTIHGGSSMTFFQNSRYQTYQRMWNYMYSKQPSVFVKSTEEGIARVLNSNYAFLLESTMNEYYRQRNCNLTQIGGLLDTKGYGIGMPVGSVFRDEFDLAILQLQENNRLEILKRKWWEGGKCPKEEDHRAKGLGMENIGGIFVVLICGLIVAIFMAMLEFLWTLRHSEASEVSVCQEMVTELRNIILCQDNIHPRRRRSGGLPPQPPVLEERRPRGTATLSNGKLCGAGEPDQLAQRLAQEAALVARGCTHIRVCPECRRFQGLRARPSPARSEESLEWDKTTNSSEPE.

A signal peptide spans methionine 1–cysteine 20. Residues serine 21–proline 545 lie on the Extracellular side of the membrane. 8 N-linked (GlcNAc...) asparagine glycosylation sites follow: asparagine 158, asparagine 220, asparagine 272, asparagine 286, asparagine 323, asparagine 408, asparagine 415, and asparagine 479. L-glutamate-binding residues include glycine 500, threonine 502, and arginine 507. Residues glycine 546 to alanine 566 traverse the membrane as a helical segment. Over arginine 567–glycine 623 the chain is Cytoplasmic. Residues valine 624 to leucine 644 traverse the membrane as a helical segment. Residues threonine 645–asparagine 804 lie on the Extracellular side of the membrane. L-glutamate-binding residues include serine 674, serine 675, and glutamate 723. Residue asparagine 736 is glycosylated (N-linked (GlcNAc...) asparagine). The chain crosses the membrane as a helical span at residues isoleucine 805–leucine 825. Residues glutamate 826–glutamate 956 are Cytoplasmic-facing. The tract at residues leucine 931 to glutamate 956 is disordered. Positions arginine 939 to lysine 948 are enriched in basic and acidic residues.

Belongs to the glutamate-gated ion channel (TC 1.A.10.1) family. GRIK4 subfamily. As to quaternary structure, homodimer. Can form functional heteromeric receptors with GRIK1, GRIK2 and GRIK3 subunits. Forms a heteromeric complex with GRIK2. In terms of tissue distribution, expressed in the hippocampus and cerebellum (at protein level).

It localises to the cell membrane. The protein resides in the postsynaptic cell membrane. Its subcellular location is the presynaptic cell membrane. Its function is as follows. Ionotropic glutamate receptor that functions as a cation-permeable ligand-gated ion channel. Cannot form functional channels on its own and produces channel activity only in heteromeric assembly with GRIK1, GRIK2 and GRIK3 subunits. This is Glutamate receptor ionotropic, kainate 4 (Grik4) from Mus musculus (Mouse).